The following is a 301-amino-acid chain: Probable alpha-L-glutamate ligase (301 aa).

An ATP-grasp domain is found at 104–287 (LQLLARKGIG…VAGQLIDYIE (184 aa)). ATP-binding positions include lysine 141, 178–179 (EF), aspartate 187, and 211–213 (RSN). Residues aspartate 248, glutamate 260, and asparagine 262 each coordinate Mg(2+). Mn(2+) contacts are provided by aspartate 248, glutamate 260, and asparagine 262.

This sequence belongs to the RimK family. Requires Mg(2+) as cofactor. It depends on Mn(2+) as a cofactor.

The polypeptide is Probable alpha-L-glutamate ligase (Maridesulfovibrio salexigens (strain ATCC 14822 / DSM 2638 / NCIMB 8403 / VKM B-1763) (Desulfovibrio salexigens)).